The following is a 55-amino-acid chain: Large ribosomal subunit protein bL33 (55 aa).

The protein belongs to the bacterial ribosomal protein bL33 family.

This is Large ribosomal subunit protein bL33 from Rhodopseudomonas palustris (strain BisB5).